The primary structure comprises 274 residues: Diaminopimelate epimerase (274 aa).

Positions 11, 44, and 64 each coordinate substrate. Catalysis depends on cysteine 73, which acts as the Proton donor. Substrate-binding positions include 74-75 (GN), asparagine 157, asparagine 190, and 208-209 (ER). Cysteine 217 acts as the Proton acceptor in catalysis. 218–219 (GS) is a substrate binding site.

This sequence belongs to the diaminopimelate epimerase family. Homodimer.

The protein localises to the cytoplasm. The catalysed reaction is (2S,6S)-2,6-diaminopimelate = meso-2,6-diaminopimelate. Its pathway is amino-acid biosynthesis; L-lysine biosynthesis via DAP pathway; DL-2,6-diaminopimelate from LL-2,6-diaminopimelate: step 1/1. In terms of biological role, catalyzes the stereoinversion of LL-2,6-diaminopimelate (L,L-DAP) to meso-diaminopimelate (meso-DAP), a precursor of L-lysine and an essential component of the bacterial peptidoglycan. In Photorhabdus laumondii subsp. laumondii (strain DSM 15139 / CIP 105565 / TT01) (Photorhabdus luminescens subsp. laumondii), this protein is Diaminopimelate epimerase.